The sequence spans 107 residues: Iron-sulfur cluster assembly protein CyaY (107 aa).

Belongs to the frataxin family.

Its function is as follows. Involved in iron-sulfur (Fe-S) cluster assembly. May act as a regulator of Fe-S biogenesis. This Yersinia pseudotuberculosis serotype O:1b (strain IP 31758) protein is Iron-sulfur cluster assembly protein CyaY.